We begin with the raw amino-acid sequence, 531 residues long: MKVKRPILLAILDGWGLAEPDKGNAVDNANMIFVKQLKQTYPWLKAHASGKWVGLPENQMGNSEVGHIHLGAGRINLESLAKLNHETKTNNIAKNDEIVKTFEYVKKNNSALHLMGLFSNGGVHSHFDHMIAIYKAAIVYGITNIKFDLITDGRDTKPKLAYDFIKNLLELIKQNNNIGIISSVSGRYYAMDRDKRFDRSRIAYNAIVNRNNVRSFTNILDYIQQEYMINHDDEMIIPAFNQDDFNGNLKANDAIIMTNFRPDRAIQISSILTNKNYIAWQSEAFSDAEFIGDKIRFVSMMKYSDSVTSPHIAYPPKPLTNTLGQYLSKLGLKQLRIAETEKIAHVTFFFDGGNDYFKNGLAKNDEITLANAYIDLIPSAKVATYDLKPQMSAVEITDKLLEEIKKDEFDFIVLNFANCDMVGHTGNNKATEIACKTLDDQLKRIHDEFVLKHNGIMVITADHGNAEIMIDKDDQVNKKHTTSLVPIIITDKNIKLKQNDPAIAKVAPTILDLMNIEIPKEMELESMIDHN.

Mn(2+) contacts are provided by Asp13 and Ser63. Ser63 serves as the catalytic Phosphoserine intermediate. Substrate-binding positions include His124, 154-155 (RD), Arg187, Arg193, 261-264 (RPDR), and Lys342. The Mn(2+) site is built by Asp420, His424, Asp462, His463, and His480.

This sequence belongs to the BPG-independent phosphoglycerate mutase family. In terms of assembly, monomer. Mn(2+) is required as a cofactor.

It carries out the reaction (2R)-2-phosphoglycerate = (2R)-3-phosphoglycerate. Its pathway is carbohydrate degradation; glycolysis; pyruvate from D-glyceraldehyde 3-phosphate: step 3/5. Catalyzes the interconversion of 2-phosphoglycerate and 3-phosphoglycerate. This is 2,3-bisphosphoglycerate-independent phosphoglycerate mutase from Mycoplasma capricolum subsp. capricolum (strain California kid / ATCC 27343 / NCTC 10154).